The primary structure comprises 203 residues: ATP phosphoribosyltransferase (203 aa).

It belongs to the ATP phosphoribosyltransferase family. Short subfamily.

It localises to the cytoplasm. It carries out the reaction 1-(5-phospho-beta-D-ribosyl)-ATP + diphosphate = 5-phospho-alpha-D-ribose 1-diphosphate + ATP. Its pathway is amino-acid biosynthesis; L-histidine biosynthesis; L-histidine from 5-phospho-alpha-D-ribose 1-diphosphate: step 1/9. In terms of biological role, catalyzes the condensation of ATP and 5-phosphoribose 1-diphosphate to form N'-(5'-phosphoribosyl)-ATP (PR-ATP). Has a crucial role in the pathway because the rate of histidine biosynthesis seems to be controlled primarily by regulation of HisG enzymatic activity. The protein is ATP phosphoribosyltransferase of Thermococcus kodakarensis (strain ATCC BAA-918 / JCM 12380 / KOD1) (Pyrococcus kodakaraensis (strain KOD1)).